We begin with the raw amino-acid sequence, 501 residues long: Melianol synthase CYP71BQ5 (501 aa).

A helical membrane pass occupies residues 1-21 (MEFRLPVLLSFLLFFLMLVRH). Residue Cys-439 coordinates heme.

It belongs to the cytochrome P450 family. Heme is required as a cofactor. Mainly expressed in petioles and roots, and, to a lower extent, in leaves.

It is found in the membrane. It catalyses the reaction dihydroniloticin + 2 reduced [NADPH--hemoprotein reductase] + 2 O2 = melianol + 2 oxidized [NADPH--hemoprotein reductase] + 3 H2O + 2 H(+). It functions in the pathway secondary metabolite biosynthesis; terpenoid biosynthesis. Its function is as follows. Monooxygenase involved in the biosynthesis of limonoids triterpene natural products such as azadirachtin, an antifeedant widely used as bioinsecticide, and possessing many medicinal applications including anti-tumoral, anti-malarial, anti-rheumatic, antibacterial, anti-inflammatory, anti-pyretic and diuretic effects. Catalyzes the conversion of dihydroniloticin to the protolimonoid melianol. The sequence is that of Melianol synthase CYP71BQ5 from Melia azedarach (Chinaberry tree).